The primary structure comprises 254 residues: MNHIHEHLKLVPVDKIDLHETFEPLRLEKTKSSIEADDFIRHPILVTAMQHGRYMVIDGVHRYTSLKALGCKKVPVQEIHETQYSISTWQHKVPFGVWWETLQQEHRLPWTTETRQEAPFITMCHGDTEQYLYTKDLGEAHFQVWEKVVASYSGCCSVERIAQGTYPCLSQQDVLMKYQPLSYKEIEAVVHKGETVPAGVTRFNISGRCLNLQVPLALLKQDDDVEQLRNWKQFLADKFANMRCYTEKVYLVEQ.

Glu-20 is an active-site residue. Ser-33 lines the ADP pocket. Ile-57 is a binding site for O-phospho-L-serine. 4 residues coordinate ADP: Asp-58, Gly-59, His-61, and Arg-62. O-phospho-L-serine is bound by residues Gly-59 and His-61. Trp-98 and Arg-229 together coordinate O-phospho-L-serine.

Forms dimers and tetramers in solution. Predominantly forms dimers. Dimerization/oligomerization is not essential for kinase activity.

It carries out the reaction L-serine + ATP = O-phospho-L-serine + ADP + H(+). Its pathway is siderophore biosynthesis. Binds heme and heme binding inhibits DNA binding. In terms of biological role, free serine kinase that uses ATP to phosphorylate L-serine to yield O-phospho-L-serine and ADP. O-phospho-L-serine serves as a substrate for SbnA and is a precursor for staphyloferrin B biosynthesis. Is also a DNA-binding regulatory protein that senses heme to control gene expression for siderophore biosynthesis. Binds to DNA within the sbnC coding region and is required for expression of genes in the sbn operon from sbnD onward. This is ATP-dependent L-serine kinase SbnI from Staphylococcus aureus (strain NCTC 8325 / PS 47).